Here is a 196-residue protein sequence, read N- to C-terminus: Phosphate-specific transport system accessory protein PhoU homolog (196 aa).

It belongs to the PhoU family. Homodimer.

Its subcellular location is the cytoplasm. Its function is as follows. Plays a role in the regulation of phosphate uptake. The sequence is that of Phosphate-specific transport system accessory protein PhoU homolog from Archaeoglobus fulgidus (strain ATCC 49558 / DSM 4304 / JCM 9628 / NBRC 100126 / VC-16).